The chain runs to 258 residues: Acyl-[acyl-carrier-protein]--UDP-N-acetylglucosamine O-acyltransferase (258 aa).

Belongs to the transferase hexapeptide repeat family. LpxA subfamily. Homotrimer.

The protein resides in the cytoplasm. It carries out the reaction a (3R)-hydroxyacyl-[ACP] + UDP-N-acetyl-alpha-D-glucosamine = a UDP-3-O-[(3R)-3-hydroxyacyl]-N-acetyl-alpha-D-glucosamine + holo-[ACP]. Its pathway is glycolipid biosynthesis; lipid IV(A) biosynthesis; lipid IV(A) from (3R)-3-hydroxytetradecanoyl-[acyl-carrier-protein] and UDP-N-acetyl-alpha-D-glucosamine: step 1/6. Its function is as follows. Involved in the biosynthesis of lipid A, a phosphorylated glycolipid that anchors the lipopolysaccharide to the outer membrane of the cell. In Stutzerimonas stutzeri (strain A1501) (Pseudomonas stutzeri), this protein is Acyl-[acyl-carrier-protein]--UDP-N-acetylglucosamine O-acyltransferase.